The primary structure comprises 320 residues: uncharacterized protein (320 aa).

This is an uncharacterized protein from Orgyia pseudotsugata (Douglas-fir tussock moth).